A 749-amino-acid chain; its full sequence is 5-methyltetrahydropteroyltriglutamate--homocysteine methyltransferase (749 aa).

5-methyltetrahydropteroyltri-L-glutamate contacts are provided by residues 15-18 (RELK) and K114. L-homocysteine-binding positions include 425 to 427 (IGS) and E478. L-methionine-binding positions include 425–427 (IGS) and E478. W555 serves as a coordination point for 5-methyltetrahydropteroyltri-L-glutamate. D593 serves as a coordination point for L-homocysteine. D593 serves as a coordination point for L-methionine. E599 contacts 5-methyltetrahydropteroyltri-L-glutamate. H636, C638, and E660 together coordinate Zn(2+). H689 functions as the Proton donor in the catalytic mechanism. Position 721 (C721) interacts with Zn(2+).

This sequence belongs to the vitamin-B12 independent methionine synthase family. Zn(2+) serves as cofactor.

The enzyme catalyses 5-methyltetrahydropteroyltri-L-glutamate + L-homocysteine = tetrahydropteroyltri-L-glutamate + L-methionine. It participates in amino-acid biosynthesis; L-methionine biosynthesis via de novo pathway; L-methionine from L-homocysteine (MetE route): step 1/1. Catalyzes the transfer of a methyl group from 5-methyltetrahydrofolate to homocysteine resulting in methionine formation. This is 5-methyltetrahydropteroyltriglutamate--homocysteine methyltransferase from Streptococcus pneumoniae serotype 2 (strain D39 / NCTC 7466).